A 1073-amino-acid polypeptide reads, in one-letter code: Carbamoyl phosphate synthase large chain (1073 aa).

The tract at residues 1 to 403 is carboxyphosphate synthetic domain; that stretch reads MPKRTDIKSI…SLQKALRGLE (403 aa). 12 residues coordinate ATP: Arg-129, Arg-169, Gly-175, Gly-176, Glu-208, Leu-210, Glu-215, Gly-241, Val-242, His-243, Gln-285, and Glu-299. One can recognise an ATP-grasp 1 domain in the interval 133 to 328; it reads DKAMKSIGLA…IARVAAKLAV (196 aa). Mg(2+) is bound by residues Gln-285, Glu-299, and Asn-301. The Mn(2+) site is built by Gln-285, Glu-299, and Asn-301. The segment at 404–553 is oligomerization domain; it reads VGVCGLDPKL…YSTYEEECEA (150 aa). Residues 554-935 are carbamoyl phosphate synthetic domain; it reads NPSTRDKIMI…AFAKAQMGAS (382 aa). The region spanning 678–869 is the ATP-grasp 2 domain; the sequence is QQMVERLNLR…LAMIAARVMA (192 aa). Residues Arg-714, His-753, Leu-755, Glu-760, Gly-785, Val-786, His-787, Ser-788, Gln-828, and Glu-840 each coordinate ATP. Mg(2+) contacts are provided by Gln-828, Glu-840, and Asn-842. Mn(2+) is bound by residues Gln-828, Glu-840, and Asn-842. One can recognise an MGS-like domain in the interval 936 to 1073; it reads EVLPTGGTAF…LQDLHAGLKA (138 aa). The allosteric domain stretch occupies residues 936 to 1073; it reads EVLPTGGTAF…LQDLHAGLKA (138 aa).

Belongs to the CarB family. Composed of two chains; the small (or glutamine) chain promotes the hydrolysis of glutamine to ammonia, which is used by the large (or ammonia) chain to synthesize carbamoyl phosphate. Tetramer of heterodimers (alpha,beta)4. The cofactor is Mg(2+). Mn(2+) serves as cofactor.

The catalysed reaction is hydrogencarbonate + L-glutamine + 2 ATP + H2O = carbamoyl phosphate + L-glutamate + 2 ADP + phosphate + 2 H(+). It catalyses the reaction hydrogencarbonate + NH4(+) + 2 ATP = carbamoyl phosphate + 2 ADP + phosphate + 2 H(+). Its pathway is amino-acid biosynthesis; L-arginine biosynthesis; carbamoyl phosphate from bicarbonate: step 1/1. The protein operates within pyrimidine metabolism; UMP biosynthesis via de novo pathway; (S)-dihydroorotate from bicarbonate: step 1/3. In terms of biological role, large subunit of the glutamine-dependent carbamoyl phosphate synthetase (CPSase). CPSase catalyzes the formation of carbamoyl phosphate from the ammonia moiety of glutamine, carbonate, and phosphate donated by ATP, constituting the first step of 2 biosynthetic pathways, one leading to arginine and/or urea and the other to pyrimidine nucleotides. The large subunit (synthetase) binds the substrates ammonia (free or transferred from glutamine from the small subunit), hydrogencarbonate and ATP and carries out an ATP-coupled ligase reaction, activating hydrogencarbonate by forming carboxy phosphate which reacts with ammonia to form carbamoyl phosphate. This is Carbamoyl phosphate synthase large chain from Pseudomonas syringae pv. tomato (strain ATCC BAA-871 / DC3000).